A 295-amino-acid polypeptide reads, in one-letter code: Aquaporin-9 (295 aa).

The Cytoplasmic segment spans residues 1-24 (MQPEGAEKGKSFKQRLVLKSSLAK). The helical transmembrane segment at 25 to 43 (ETLSEFLGTFILIVLGCGC) threads the bilayer. Topologically, residues 44-57 (VAQAILSRGRFGGV) are extracellular. A helical membrane pass occupies residues 58–77 (ITINVGFSMAVAMAIYVAGG). Topologically, residues 78–79 (VS) are cytoplasmic. An intramembrane region (discontinuously helical) is located at residues 80–92 (GGHINPAVSLAMC). Positions 84–86 (NPA) match the NPA 1 motif. Residues 93–98 (LFGRMK) are Cytoplasmic-facing. The helical transmembrane segment at 99-123 (WFKLPFYVGAQFLGAFVGAATVFGI) threads the bilayer. The Extracellular segment spans residues 124-160 (YYDGLMSFAGGKLLIVGENATAHIFATYPAPYLSLAN). Residues 161-178 (AFADQVVATMILLIIVFA) form a helical membrane-spanning segment. Residues 179–190 (IFDSRNLGAPRG) are Cytoplasmic-facing. The helical transmembrane segment at 191–207 (LEPIAIGLLIIVIASSL) threads the bilayer. The Extracellular portion of the chain corresponds to 208-210 (GLN). The discontinuously helical intramembrane region spans 211–225 (SGCAMNPARDLSPRL). An NPA 2 motif is present at residues 216 to 218 (NPA). Residues 226–243 (FTALAGWGFEVFRAGNNF) are Extracellular-facing. The chain crosses the membrane as a helical span at residues 244-264 (WWIPVVGPLVGAVIGGLIYVL). Over 265–295 (VIEIHHPEPDSVFKTEQSEDKPEKYELSVIM) the chain is Cytoplasmic.

The protein belongs to the MIP/aquaporin (TC 1.A.8) family. In terms of assembly, homotetramer; each monomer provides an independent glycerol/water pore. As to expression, highly expressed in peripheral leukocytes. Also expressed in liver, lung, and spleen.

The protein localises to the cell membrane. It localises to the basolateral cell membrane. It catalyses the reaction glycerol(in) = glycerol(out). The catalysed reaction is H2O(in) = H2O(out). The enzyme catalyses urea(in) = urea(out). It carries out the reaction (S)-lactate(in) = (S)-lactate(out). It catalyses the reaction NH4(+)(in) = NH4(+)(out). The catalysed reaction is uracil(in) = uracil(out). The enzyme catalyses adenine(out) = adenine(in). It carries out the reaction 3-hydroxybutanoate(in) = 3-hydroxybutanoate(out). It catalyses the reaction D-sorbitol(in) = D-sorbitol(out). The catalysed reaction is D-mannitol(in) = D-mannitol(out). The enzyme catalyses H2O2(out) = H2O2(in). It carries out the reaction arsenite(in) = arsenite(out). It catalyses the reaction selenite(in) = selenite(out). Functionally, aquaglyceroporins form homotetrameric transmembrane channels, with each monomer independently mediating glycerol and water transport across the plasma membrane along their osmotic gradient. AQP9 is the primary route for glycerol uptake in hepatocytes, supporting hepatic gluconeogenesis. It exhibits broad specificity and may transport various small, non-charged solutes, including carbamides, polyols, purines, and pyrimidines. AQP9 may also facilitate hepatic urea extrusion. Due to its permeability to lactate, AQP9 might participate in the astrocyte-to-neuron lactate shuttle, supplying neurons with energy. Additionally, AQP9 is permeable to arsenite, contributing to arsenic excretion by the liver and providing partial protection against arsenic toxicity. It is also permeable to H2O2 in vivo. Could also be permeable to ammonium. The sequence is that of Aquaporin-9 from Homo sapiens (Human).